The chain runs to 1208 residues: DNA-directed RNA polymerase subunit beta (1208 aa).

Belongs to the RNA polymerase beta chain family. As to quaternary structure, the RNAP catalytic core consists of 2 alpha, 1 beta, 1 beta' and 1 omega subunit. When a sigma factor is associated with the core the holoenzyme is formed, which can initiate transcription.

It catalyses the reaction RNA(n) + a ribonucleoside 5'-triphosphate = RNA(n+1) + diphosphate. Its function is as follows. DNA-dependent RNA polymerase catalyzes the transcription of DNA into RNA using the four ribonucleoside triphosphates as substrates. The polypeptide is DNA-directed RNA polymerase subunit beta (Enterococcus faecium (Streptococcus faecium)).